Consider the following 493-residue polypeptide: MSESARTDVVLVGAGIMSATLGAMLRRLEPDWSITLIERLDAVAAESSGPWNNAGTGHSALCELNYTPQRPDGSIDISKAVRINEEFQVTRQFWAYAAENGILNDVRSFLNPLPHVSFVHGAERVHQLRRRRDALAGNPLFAGAEWIDDPDEFARRLPLMAAKRVFSEPIALNWAADGTDVDFGALSRQLIGYCVRNGAVALFGQEVRNLVRQPDGGWMLTVVNRRTGEKRKLKTKFVFVGAGGNALSLLQRSGIKEINGFAGFPIGGRFLRTANPALTAAHRAKVYGVPAPGAPPLGALHLDLRYVNGKSWLMFGPFAGWSPKFLKRGHLRDLPGSIKPNNILSMVGVGVTQVTLLNYLIGQLRLSEPDRVAVLRKFVPSAADSDWELIVAGQRVQVIRRDKRKGGVLEFGTTVVGEADGSIAGLLGGSPGASTAVPIMLEVLQRCFTHRYQSWLPALKEMVPSLGANLSEEPVLYDEVRSWSSRALQLDAS.

The protein belongs to the MQO family. Requires FAD as cofactor.

The enzyme catalyses (S)-malate + a quinone = a quinol + oxaloacetate. The protein operates within carbohydrate metabolism; tricarboxylic acid cycle; oxaloacetate from (S)-malate (quinone route): step 1/1. The sequence is that of Probable malate:quinone oxidoreductase from Mycobacterium marinum (strain ATCC BAA-535 / M).